The sequence spans 495 residues: Ferruginol synthase (495 aa).

M1 is a topological domain (lumenal). The chain crosses the membrane as a helical span at residues 2–22; sequence DSFPLLAALFFIAATITFLSF. Topologically, residues 23-495 are cytoplasmic; that stretch reads RRRRNLPPGP…PLRIIPIVKS (473 aa). C437 provides a ligand contact to heme.

Belongs to the cytochrome P450 family. Heme serves as cofactor. As to expression, expression is more abundant in the rhizome.

The protein localises to the endoplasmic reticulum membrane. The enzyme catalyses abieta-8,11,13-triene + reduced [NADPH--hemoprotein reductase] + O2 = ferruginol + oxidized [NADPH--hemoprotein reductase] + H2O + H(+). Cytochrome P450 enzyme (CYP) which catalyzes a unique two-electron oxidation cascade on abieta-8,11,13-triene to produce ferruginol, an intermediate in tanshinone biosynthesis. The chain is Ferruginol synthase from Salvia miltiorrhiza (Chinese sage).